The chain runs to 127 residues: Fluoride-specific ion channel FluC (127 aa).

Helical transmembrane passes span 4–24 (FTLLGFIALGGAFGACSRYLI), 35–55 (GFPYGTLTVNVIGSLLMGILM), 71–91 (IIGLGFLGALTTFSTFSMDNV), and 99–119 (FIKAGLNILLNVALSITACFI). Positions 78 and 81 each coordinate Na(+).

This sequence belongs to the fluoride channel Fluc/FEX (TC 1.A.43) family.

The protein resides in the cell inner membrane. It catalyses the reaction fluoride(in) = fluoride(out). With respect to regulation, na(+) is not transported, but it plays an essential structural role and its presence is essential for fluoride channel function. Its function is as follows. Fluoride-specific ion channel. Important for reducing fluoride concentration in the cell, thus reducing its toxicity. The protein is Fluoride-specific ion channel FluC of Photobacterium profundum (strain SS9).